The primary structure comprises 346 residues: Immunoglobulin heavy constant alpha (346 aa).

3 Ig-like domains span residues 6 to 96, 118 to 212, and 221 to 323; these read PSIF…KSVD, PRLS…VSIT, and PQVH…KSID. The cysteines at positions 26 and 83 are disulfide-linked. Residue Asn-134 is glycosylated (N-linked (GlcNAc...) (complex) asparagine). Disulfide bonds link Cys-139–Cys-196 and Cys-243–Cys-306. Asn-333 carries an N-linked (GlcNAc...) (complex) asparagine glycan.

Immunoglobulins are composed of two identical heavy chains and two identical light chains; disulfide-linked. Monomeric or polymeric. Part of the secretory IgA (sIgA) complex that consists of two, four or five IgA monomers, and two additional non-Ig polypeptides, namely the JCHAIN and the secretory component (the proteolytic product of PIGR). In terms of processing, N-glycosylated. N-glycans attached to Asn-134 varies from differentially fucosylated complex and hybrid to sialylated with N-glycoyl neuraminic acid types: GlcNAc2Man3GlcNAc2(Fuc); GlcNAc1Man4GlcNAc2(Fuc); GlcNAc1Man4GlcNAc2; Gal1GlcNAc2Man3GlcNAc2(Fuc); GlcNAc2Man3GlcNAc2; Gal1GlcNAc2Man3GlcNAc2; GlcNAc1Man3GlcNAc2; GlcNAc1Man2GlcNAc2 and NeuGc1Gal1GlcNAc2Man3GlcNAc2(Fuc). N-glycans attached to Asn-333 are mainly fucosylated complex types: GlcNAc2Man3GlcNAc2; GlcNAc1Man3GlcNAc2; GlcNAc1Man3GlcNAc2(Fuc); GlcNAc2Man3GlcNAc2(Fuc); Gal1GlcNAc2Man3GlcNAc2(Fuc); NeuGc1Gal1GlcNAc1Man3GlcNAc2(Fuc); NeuGc1Gal1GlcNAc2Man3GlcNAc2(Fuc) and NeuAc1Gal1GlcNAc2Man3GlcNAc2(Fuc).

It is found in the secreted. The protein resides in the cell membrane. In terms of biological role, constant region of immunoglobulin heavy chains. Immunoglobulins, also known as antibodies, are membrane-bound or secreted glycoproteins produced by B lymphocytes. In the recognition phase of humoral immunity, the membrane-bound immunoglobulins serve as receptors which, upon binding of a specific antigen, trigger the clonal expansion and differentiation of B lymphocytes into immunoglobulins-secreting plasma cells. Secreted immunoglobulins mediate the effector phase of humoral immunity, which results in the elimination of bound antigens. The antigen binding site is formed by the variable domain of one heavy chain, together with that of its associated light chain. Thus, each immunoglobulin has two antigen binding sites with remarkable affinity for a particular antigen. The variable domains are assembled by a process called V-(D)-J rearrangement and can then be subjected to somatic hypermutations which, after exposure to antigen and selection, allow affinity maturation for a particular antigen. Ig alpha is the major immunoglobulin class in body secretions. This chain is Immunoglobulin heavy constant alpha (IGHA), found in Equus asinus (Donkey).